The sequence spans 361 residues: Adenosine kinase (361 aa).

The Nuclear localization signal signature appears at 7-15 (PKPKKLKVE). Asp-34 lines the adenosine pocket. Ser-48 is a binding site for Mg(2+). Tyr-76 carries the post-translational modification Phosphotyrosine. Asn-147 contacts Mg(2+). Gln-305 is a binding site for adenosine. Asp-316 is an active-site residue. Asp-316 (proton acceptor) is an active-site residue.

It belongs to the carbohydrate kinase PfkB family. Monomer. Mg(2+) serves as cofactor. Widely expressed. Highly expressed in liver, testis, kidney and spleen (at protein level). In brain, expression in most forebrain structures and the cerebellum is higher than in the midbrain and brainstem (at protein level). In terms of tissue distribution, major isoform in testis and kidney. Not detected in most brain regions, except in the cerebellum, where it is expressed at a similar level to that of isoform 2 (at protein level). As to expression, major isoform in spleen and in most brain regions, except in the cerebellum, where it is expressed at a similar level to that of isoform 1 (at protein level).

Its subcellular location is the nucleus. The protein resides in the cytoplasm. It carries out the reaction adenosine + ATP = AMP + ADP + H(+). It functions in the pathway purine metabolism; AMP biosynthesis via salvage pathway; AMP from adenosine: step 1/1. Its activity is regulated as follows. Activity is inhibited by 5-iodotubercidin and 5'-amino-5'-deoxyadenosine. In terms of biological role, catalyzes the phosphorylation of the purine nucleoside adenosine at the 5' position in an ATP-dependent manner. Serves as a potential regulator of concentrations of extracellular adenosine and intracellular adenine nucleotides. This Mus musculus (Mouse) protein is Adenosine kinase (Adk).